The chain runs to 497 residues: MORN repeat-containing protein 1 (497 aa).

The tract at residues Met1–Tyr27 is disordered. MORN repeat units follow at residues Tyr39 to Tyr61, Tyr62 to Asp84, Phe86 to Cys108, Tyr109 to Val131, Tyr132 to Lys154, Tyr155 to Thr177, and Tyr178 to Thr200. 2 disordered regions span residues Gly393–Glu425 and Gln468–Arg497.

This Homo sapiens (Human) protein is MORN repeat-containing protein 1 (MORN1).